A 62-amino-acid polypeptide reads, in one-letter code: MDILKKSLFLILFLGLVSISFCDGEKRQDDDEANESEEKKEIHEVEKRLRPAILVRTKGKGK.

The signal sequence occupies residues 1 to 24 (MDILKKSLFLILFLGLVSISFCDG). Residues 25–46 (EKRQDDDEANESEEKKEIHEVE) constitute a propeptide that is removed on maturation. A Lysine amide modification is found at Lys-58.

Expressed by the skin glands.

The protein resides in the secreted. Induces contraction of smooth muscle in isolated rat urinary bladder with an EC(50) value of 2.2nM. The protein is Sauvatide of Phyllomedusa sauvagei (Sauvage's leaf frog).